Reading from the N-terminus, the 126-residue chain is CD59 glycoprotein (126 aa).

The signal sequence occupies residues 1 to 25; that stretch reads MGIQGGSVLFGLLLALAVFCHSGHS. The UPAR/Ly6 domain maps to 26–106; that stretch reads LQCYNCPNPT…QLENGGTSLS (81 aa). 5 disulfide bridges follow: cysteine 28–cysteine 51, cysteine 31–cysteine 38, cysteine 44–cysteine 64, cysteine 70–cysteine 88, and cysteine 89–cysteine 94. An N-linked (GlcNAc...) asparagine glycan is attached at asparagine 43. Residue asparagine 100 is the site of GPI-anchor amidated asparagine attachment. The propeptide at 101 to 126 is removed in mature form; the sequence is GGTSLSEKTVLLLVTPLLAAAWCLHP.

As to quaternary structure, interacts with T-cell surface antigen CD2. Post-translationally, N- and O-glycosylated.

The protein resides in the cell membrane. It is found in the secreted. Potent inhibitor of the complement membrane attack complex (MAC) action, which protects self-cells from damage during complement activation. Acts by binding to the beta-haipins of C8 (C8A and C8B) components of the assembling MAC, forming an intermolecular beta-sheet that prevents incorporation of the multiple copies of C9 required for complete formation of the osmolytic pore. In Papio sp. (Baboon), this protein is CD59 glycoprotein.